The chain runs to 379 residues: Alternative oxidase 1, mitochondrial (379 aa).

Residues 33–50 (TTTTSTKSRSSTSTAATT) are compositionally biased toward low complexity. Positions 33–76 (TTTTSTKSRSSTSTAATTVGNSNPKSPIDEDNLEKPGTIPTKHK) are disordered. Fe cation contacts are provided by glutamate 180, glutamate 219, and histidine 222. The helical transmembrane segment at 234-256 (WFTRSIIYIGQGVFTNIFFLVYL) threads the bilayer. 4 residues coordinate Fe cation: glutamate 270, glutamate 271, glutamate 326, and histidine 329.

The protein belongs to the alternative oxidase family. Fe cation is required as a cofactor.

It is found in the mitochondrion inner membrane. Its function is as follows. Catalyzes cyanide-resistant oxygen consumption. May increase respiration when the cytochrome respiratory pathway is restricted, or in response to low temperatures. The polypeptide is Alternative oxidase 1, mitochondrial (AOX1) (Candida albicans (Yeast)).